The following is a 138-amino-acid chain: uncharacterized protein (138 aa).

This is an uncharacterized protein from Bacillus subtilis (strain 168).